Here is a 50-residue protein sequence, read N- to C-terminus: Parvalbumin (50 aa).

The EF-hand domain occupies 38 to 50; it reads KTHEQVKKVFNIL.

This sequence belongs to the parvalbumin family.

Its function is as follows. Probably regulates the activity of the caudal neurosecretory system. Binds two calcium ions. This Scyliorhinus canicula (Small-spotted catshark) protein is Parvalbumin.